Reading from the N-terminus, the 364-residue chain is Histidinol-phosphate aminotransferase 1 (364 aa).

The residue at position 211 (Lys211) is an N6-(pyridoxal phosphate)lysine.

The protein belongs to the class-II pyridoxal-phosphate-dependent aminotransferase family. Histidinol-phosphate aminotransferase subfamily. In terms of assembly, homodimer. It depends on pyridoxal 5'-phosphate as a cofactor.

It catalyses the reaction L-histidinol phosphate + 2-oxoglutarate = 3-(imidazol-4-yl)-2-oxopropyl phosphate + L-glutamate. It functions in the pathway amino-acid biosynthesis; L-histidine biosynthesis; L-histidine from 5-phospho-alpha-D-ribose 1-diphosphate: step 7/9. The protein is Histidinol-phosphate aminotransferase 1 of Legionella pneumophila (strain Lens).